The primary structure comprises 449 residues: MFS-type transporter 1 (449 aa).

Basic and acidic residues predominate over residues 1-37 (MTHSSSNEHEKEDDRRASDDMMDRDDQNAKEEQDVSK). Residues 1 to 43 (MTHSSSNEHEKEDDRRASDDMMDRDDQNAKEEQDVSKDAPPVN) are disordered. Transmembrane regions (helical) follow at residues 61 to 81 (VAGGFCSLFCSFGWINCIGIF), 97 to 117 (TISWIASLELFILFAGGLVVG), 127 to 147 (YILLFGTFMHVFGLMMASLST), 152 to 172 (ILLSQGICSPIGISCLFTPAV), 185 to 205 (LANGIVAAGSSLGGVIFPIMF), and 212 to 232 (VGFPWAMRIGAFLILFLLIIA). N-linked (GlcNAc...) asparagine glycosylation is present at asparagine 233. A run of 6 helical transmembrane segments spans residues 262–282 (LLTTIAAMIFVLGLFLPINYI), 298–318 (YLIPILNAASLFGRTVPGFVA), 326–346 (VHTFMCFFSSVVAFALWLPAA), 349–369 (APIIVFAALYGFGSGAFVAIL), 390–410 (FGVLSLPALVSNPIGGAFVAH), and 420–440 (IWTGCITMLGAILFVVARISL).

Belongs to the major facilitator superfamily. Monocarboxylate porter (TC 2.A.1.13) family.

Its subcellular location is the cell membrane. The enzyme catalyses erythrostominone(in) = erythrostominone(out). The catalysed reaction is deoxyerythrostominone(in) = deoxyerythrostominone(out). It catalyses the reaction epierythrostominol(in) = epierythrostominol(out). It carries out the reaction deoxyerythrostominol(in) = deoxyerythrostominol(out). Functionally, MFS-type transporter that mediates the secretion of the 4 major naphthoquinone derivatives produced, erythrostominone (NQ1), deoxyerythrostominone (NQ2), epierythrostominol (NQ4), and deoxyerythrostominol (NQ5), as well as of 3 newly identified naphthoquinone derivatives termed NQ7, NQ8 and NQ9. The chain is MFS-type transporter 1 from Ophiocordyceps sp. (strain BCC 1869) (Entomopathogenic fungus).